Reading from the N-terminus, the 51-residue chain is Light-harvesting protein B800/850/890 beta-2 chain (51 aa).

The Cytoplasmic segment spans residues 1–17; sequence ADEMRNVSDEEAKEFHA. Residues histidine 16 and histidine 34 each contribute to the a bacteriochlorophyll site. The chain crosses the membrane as a helical span at residues 18-40; it reads MFSQAFTVYVGVAVVAHILAWAW. Residues 41–51 are Periplasmic-facing; the sequence is RPWIPGDEGFG.

The protein belongs to the antenna complex beta subunit family. In terms of assembly, the core complex is formed by different alpha and beta chains, binding bacteriochlorophyll molecules, and arranged most probably in tetrameric structures disposed around the reaction center. The non-pigmented gamma chains may constitute additional components.

Its subcellular location is the cell inner membrane. Antenna complexes are light-harvesting systems, which transfer the excitation energy to the reaction centers. This chain is Light-harvesting protein B800/850/890 beta-2 chain, found in Halorhodospira halophila (strain DSM 244 / SL1) (Ectothiorhodospira halophila (strain DSM 244 / SL1)).